The primary structure comprises 77 residues: MKEQKWIHEGLITESLPNGMFRIRLDNEDMILGYVSGKIRRSFIRILPGDRVKIEVSRYDSTRGRIIYRLRNKNSKD.

The region spanning 1–71 (MKEQKWIHEG…TRGRIIYRLR (71 aa)) is the S1-like domain.

Belongs to the IF-1 family. As to quaternary structure, component of the 30S ribosomal translation pre-initiation complex which assembles on the 30S ribosome in the order IF-2 and IF-3, IF-1 and N-formylmethionyl-tRNA(fMet); mRNA recruitment can occur at any time during PIC assembly.

It localises to the plastid. The protein resides in the chloroplast. Its function is as follows. One of the essential components for the initiation of protein synthesis. Stabilizes the binding of IF-2 and IF-3 on the 30S subunit to which N-formylmethionyl-tRNA(fMet) subsequently binds. Helps modulate mRNA selection, yielding the 30S pre-initiation complex (PIC). Upon addition of the 50S ribosomal subunit IF-1, IF-2 and IF-3 are released leaving the mature 70S translation initiation complex. This is Translation initiation factor IF-1, chloroplastic from Hedera helix (English ivy).